The following is a 142-amino-acid chain: Hemoglobin subunit alpha-1 (142 aa).

Positions 2–142 constitute a Globin domain; that stretch reads KLSADDKHNV…VGYVLASKYR (141 aa). H59 is a binding site for O2. H88 is a binding site for heme b.

The protein belongs to the globin family. As to quaternary structure, major hemoglobin is a heterotetramer of two alpha-1 chains and two beta-1 chains. Red blood cells.

Involved in oxygen transport from the lung to the various peripheral tissues. This Triturus cristatus (Great crested newt) protein is Hemoglobin subunit alpha-1.